The primary structure comprises 86 residues: Large ribosomal subunit protein bL27 (86 aa).

The protein belongs to the bacterial ribosomal protein bL27 family.

This Cupriavidus metallidurans (strain ATCC 43123 / DSM 2839 / NBRC 102507 / CH34) (Ralstonia metallidurans) protein is Large ribosomal subunit protein bL27.